The primary structure comprises 241 residues: Ribosomal RNA small subunit methyltransferase J (241 aa).

S-adenosyl-L-methionine-binding positions include 94-95 (RD) and Asp-163.

It belongs to the methyltransferase superfamily. RsmJ family.

The protein resides in the cytoplasm. It carries out the reaction guanosine(1516) in 16S rRNA + S-adenosyl-L-methionine = N(2)-methylguanosine(1516) in 16S rRNA + S-adenosyl-L-homocysteine + H(+). Functionally, specifically methylates the guanosine in position 1516 of 16S rRNA. The polypeptide is Ribosomal RNA small subunit methyltransferase J (Francisella tularensis subsp. tularensis (strain FSC 198)).